A 496-amino-acid polypeptide reads, in one-letter code: Alanine aminotransferase 1 (496 aa).

N-acetylalanine is present on alanine 2. Threonine 22 carries the phosphothreonine modification. The residue at position 314 (lysine 314) is an N6-(pyridoxal phosphate)lysine.

This sequence belongs to the class-I pyridoxal-phosphate-dependent aminotransferase family. Alanine aminotransferase subfamily. In terms of assembly, homodimer. It depends on pyridoxal 5'-phosphate as a cofactor. Liver, kidney, heart, and skeletal muscles. Expressed at moderate levels in the adipose tissue.

The protein localises to the cytoplasm. It carries out the reaction L-alanine + 2-oxoglutarate = pyruvate + L-glutamate. It functions in the pathway amino-acid degradation; L-alanine degradation via transaminase pathway; pyruvate from L-alanine: step 1/1. Catalyzes the reversible transamination between alanine and 2-oxoglutarate to form pyruvate and glutamate. Participates in cellular nitrogen metabolism and also in liver gluconeogenesis starting with precursors transported from skeletal muscles. This Homo sapiens (Human) protein is Alanine aminotransferase 1 (GPT).